A 272-amino-acid polypeptide reads, in one-letter code: Undecaprenyl-diphosphatase (272 aa).

7 helical membrane-spanning segments follow: residues 2–22 (FDII…FLPI), 43–63 (FINM…ILLY), 82–102 (WQLW…GLPL), 110–130 (LHTP…FIIL), 185–205 (YVAT…VSIL), 224–244 (VLMT…KWLL), and 252–272 (FKPF…VMFI).

This sequence belongs to the UppP family.

It localises to the cell membrane. The catalysed reaction is di-trans,octa-cis-undecaprenyl diphosphate + H2O = di-trans,octa-cis-undecaprenyl phosphate + phosphate + H(+). Its function is as follows. Catalyzes the dephosphorylation of undecaprenyl diphosphate (UPP). Confers resistance to bacitracin. The chain is Undecaprenyl-diphosphatase from Lacticaseibacillus paracasei (strain ATCC 334 / BCRC 17002 / CCUG 31169 / CIP 107868 / KCTC 3260 / NRRL B-441) (Lactobacillus paracasei).